Here is a 134-residue protein sequence, read N- to C-terminus: Methylmalonyl-CoA decarboxylase subunit gamma (134 aa).

The segment covering 28–38 (APAARPAAAPA) has biased composition (low complexity). A disordered region spans residues 28–67 (APAARPAAAPAPAAPKPAAAPAPAPAPKTTAAGAGAGANT). Over residues 39–53 (PAAPKPAAAPAPAPA) the composition is skewed to pro residues. The segment covering 54–67 (PKTTAAGAGAGANT) has biased composition (low complexity). One can recognise a Biotinyl-binding domain in the interval 58 to 134 (AAGAGAGANT…NAGDILVVLS (77 aa)). Lys100 is modified (N6-biotinyllysine).

The methylmalonyl-CoA decarboxylase is composed of four subunits: the carboxyltransferase alpha subunit (MmdA), the tunnel beta subunit (MmdB), the biotin-containing gamma subunit (MmdC) and the delta subunit (MmdD). Requires biotin as cofactor.

The protein localises to the cell membrane. The enzyme catalyses (S)-methylmalonyl-CoA + Na(+)(in) + H(+)(out) = propanoyl-CoA + Na(+)(out) + CO2. Functionally, biotin-containing subunit of the sodium ion pump methylmalonyl-CoA decarboxylase, which converts the chemical energy of a decarboxylation reaction into an electrochemical gradient of Na(+) ions across the cytoplasmic membrane, thereby creating a sodium ion motive force that is used for ATP synthesis. This chain is Methylmalonyl-CoA decarboxylase subunit gamma, found in Propionigenium modestum.